A 1612-amino-acid polypeptide reads, in one-letter code: MSSPSKPTSPFVDDIEHESGSASNGLSSMSPFDDSFQFEKPSSAHGNIEVAKTGGSVLKRQSKPMKDISTPDLSKVTFDGIDDYSNDNDINDDDELNGKKTEIHEHENEVDDDLHSFQATPMPNTGGFEDVELDNNEGSNNDSQADHKLKRVRFGTRRNKSGRIDINRSKTLKWAKKNFHNAIDEFSTKEDSLENSALQNRSDELRTVYYNLPLPEDMLDEDGLPLAVYPRNKIRTTKYTPLTFFPKNILFQFHNFANIYFLILLILGAFQIFGVTNPGFASVPLIVIVIITAIKDGIEDSRRTVLDLEVNNTRTHILSGVKNENVAVDNVSLWRRFKKANTRALIKIFEYFSENLTAAGREKKLQKKREELRRKRNSRSFGPRGSLDSIGSYRMSADFGRPSLDYENLNQTMSQANRYNDGENLVDRTLQPNPECRFAKDYWKNVKVGDIVRVHNNDEIPADMILLSTSDVDGACYVETKNLDGETNLKVRQSLKCSKIIKSSRDITRTKFWVESEGPHANLYSYQGNFKWQDTQNGNIRNEPVNINNLLLRGCTLRNTKWAMGMVIFTGDDTKIMINAGVTPTKKSRISRELNFSVILNFVLLFILCFTAGIVNGVYYKQKPRSRDYFEFGTIGGSASTNGFVSFWVAVILYQSLVPISLYISVEIIKTAQAIFIYTDVLLYNAKLDYPCTPKSWNISDDLGQIEYIFSDKTGTLTQNVMEFKKCTINGVSYGRAYTEALAGLRKRQGVDVESEGRREKEEIAKDRETMIDELRSMSDNTQFCPEDLTFVSKEIVEDLKGSSGDHQQKCCEHFLLALALCHSVLVEPNKDDPKKLDIKAQSPDESALVSTARQLGYSFVGSSKSGLIVEIQGVQKEFQVLNVLEFNSSRKRMSCIIKIPGSTPKDEPKALLICKGADSVIYSRLDRTQNDATLLEKTALHLEEYATEGLRTLCLAQRELTWSEYERWVKTYDVAAASVTNREEELDKVTDVIERELILLGGTAIEDRLQDGVPDSIALLAEAGIKLWVLTGDKVETAINIGFSCNVLNNDMELLVVKASGEDVEEFGSDPIQVVNNLVTKYLREKFGMSGSEEELKEAKREHGLPQGNFAVIIDGDALKVALNGEEMRRKFLLLCKNCKAVLCCRVSPAQKAAVVKLVKKTLDVMTLAIGDGSNDVAMIQSADVGVGIAGEEGRQAVMCSDYAIGQFRYVTRLVLVHGKWCYKRLAEMIPQFFYKNVIFTLSLFWYGIYNNFDGSYLFEYTYLTFYNLAFTSVPVILLAVLDQDVSDTVSMLVPQLYRVGILRKEWNQTKFLWYMLDGVYQSVICFFFPYLAYHKNMVVTENGLGLDHRYFVGVFVTAIAVTSCNFYVFMEQYRWDWFCGLFICLSLAVFYGWTGIWTSSSSSNEFYKGAARVFAQPAYWAVLFVGVLFCLLPRFTIDCIRKIFYPKDIEIVREMWLRGDFDLYPQGYDPTDPSRPRINEIRPLTDFKEPISLDTHFDGVSHSQETIVTEEIPMSILNGEQGSRKGYRVSTTLERRDQLSPVTTTNNLPRRSMASARGNKLRTSLDRTREEMLANHQLDTRYSVERARASLDLPGINHAETLLSQRSRDR.

Positions 1-74 are disordered; it reads MSSPSKPTSP…MKDISTPDLS (74 aa). The Cytoplasmic portion of the chain corresponds to 1-252; that stretch reads MSSPSKPTSP…TFFPKNILFQ (252 aa). Residues 20-30 show a composition bias toward low complexity; sequence GSASNGLSSMS. At threonine 70 the chain carries Phosphothreonine. Position 85 is a phosphoserine (serine 85). Residues 253–273 traverse the membrane as a helical segment; that stretch reads FHNFANIYFLILLILGAFQIF. Positions 272–279 are involved in phosphatidylcholine substrate selection; it reads IFGVTNPG. At 274-277 the chain is on the extracellular side; the sequence is GVTN. Residues 278–298 traverse the membrane as a helical segment; sequence PGFASVPLIVIVIITAIKDGI. Over 299-598 the chain is Cytoplasmic; sequence EDSRRTVLDL…RISRELNFSV (300 aa). Over residues 364–373 the composition is skewed to basic and acidic residues; it reads KLQKKREELR. Residues 364–384 are disordered; sequence KLQKKREELRRKRNSRSFGPR. Serine 389, serine 392, serine 396, and serine 403 each carry phosphoserine. Residue tyrosine 406 is modified to Phosphotyrosine. The helical transmembrane segment at 599–619 threads the bilayer; that stretch reads ILNFVLLFILCFTAGIVNGVY. At 620–639 the chain is on the extracellular side; that stretch reads YKQKPRSRDYFEFGTIGGSA. The interval 631 to 635 is involved in phosphatidylcholine substrate selection; it reads EFGTI. A helical membrane pass occupies residues 640-660; sequence STNGFVSFWVAVILYQSLVPI. The Cytoplasmic portion of the chain corresponds to 661–1231; sequence SLYISVEIIK…WCYKRLAEMI (571 aa). The active-site 4-aspartylphosphate intermediate is aspartate 712. ATP is bound by residues aspartate 712, lysine 713, and threonine 714. Aspartate 712 lines the Mg(2+) pocket. Threonine 714 is a binding site for Mg(2+). Threonine 782 carries the post-translational modification Phosphothreonine. Glutamate 846, phenylalanine 887, serine 889, lysine 892, and lysine 916 together coordinate ATP. A Glycyl lysine isopeptide (Lys-Gly) (interchain with G-Cter in ubiquitin) cross-link involves residue lysine 938. 7 residues coordinate ATP: arginine 952, threonine 953, threonine 1032, glycine 1033, aspartate 1034, arginine 1147, and lysine 1153. Mg(2+) is bound at residue aspartate 1173. ATP contacts are provided by asparagine 1176 and aspartate 1177. Aspartate 1177 is a binding site for Mg(2+). Residues 1232-1252 traverse the membrane as a helical segment; the sequence is PQFFYKNVIFTLSLFWYGIYN. The Extracellular portion of the chain corresponds to 1253–1262; that stretch reads NFDGSYLFEY. The chain crosses the membrane as a helical span at residues 1263-1283; sequence TYLTFYNLAFTSVPVILLAVL. Residues 1284–1313 are Cytoplasmic-facing; the sequence is DQDVSDTVSMLVPQLYRVGILRKEWNQTKF. Residues 1314–1334 traverse the membrane as a helical segment; sequence LWYMLDGVYQSVICFFFPYLA. Residues 1335–1350 lie on the Extracellular side of the membrane; that stretch reads YHKNMVVTENGLGLDH. Residues 1351 to 1371 form a helical membrane-spanning segment; it reads RYFVGVFVTAIAVTSCNFYVF. The Cytoplasmic segment spans residues 1372-1377; the sequence is MEQYRW. The helical transmembrane segment at 1378–1398 threads the bilayer; the sequence is DWFCGLFICLSLAVFYGWTGI. The Extracellular segment spans residues 1399–1418; sequence WTSSSSSNEFYKGAARVFAQ. A helical transmembrane segment spans residues 1419 to 1439; sequence PAYWAVLFVGVLFCLLPRFTI. Residue arginine 1436 participates in a 1,2-diacyl-sn-glycero-3-phospho-L-serine binding. Residues 1440–1612 lie on the Cytoplasmic side of the membrane; sequence DCIRKIFYPK…TLLSQRSRDR (173 aa). Serine 1542 carries the phosphoserine modification. The segment at 1544–1563 is disordered; the sequence is VTTTNNLPRRSMASARGNKL. Serine 1592 bears the Phosphoserine mark.

This sequence belongs to the cation transport ATPase (P-type) (TC 3.A.3) family. Type IV subfamily. Component of a flippase complex consisting of DNF1 and LEM3. Interacts with LEM3; the interaction is direct. The cofactor is Mg(2+). In terms of processing, phosphorylated by FPK1 and KIN82.

The protein localises to the cell membrane. The catalysed reaction is ATP + H2O + phospholipidSide 1 = ADP + phosphate + phospholipidSide 2.. The enzyme catalyses a 1,2-diacyl-sn-glycero-3-phosphoethanolamine(out) + ATP + H2O = a 1,2-diacyl-sn-glycero-3-phosphoethanolamine(in) + ADP + phosphate + H(+). It catalyses the reaction a 1,2-diacyl-sn-glycero-3-phosphocholine(out) + ATP + H2O = a 1,2-diacyl-sn-glycero-3-phosphocholine(in) + ADP + phosphate + H(+). It carries out the reaction a beta-D-glucosyl-(1&lt;-&gt;1')-N-acylsphing-4-enine(out) + ATP + H2O = a beta-D-glucosyl-(1&lt;-&gt;1')-N-acylsphing-4-enine(in) + ADP + phosphate + H(+). The catalysed reaction is a 1,2-diacyl-sn-glycero-3-phospho-L-serine(out) + ATP + H2O = a 1,2-diacyl-sn-glycero-3-phospho-L-serine(in) + ADP + phosphate + H(+). Its activity is regulated as follows. Phosphatidylcholine flippase activity is inhibited by glucosylsphingosine, lactosylsphingosine, lysophosphatidylcholine and to a lesser degree sphingosine-1-phosphate and lysosphingomyelin. Glucosylceramide flippase activity is inhibited by lysophosphatidylcholine, glucosylsphingosine and to a lesser degree lactosylsphingosine whereas lysosphingomyelin has a stimulatory effect at low concentrations. In terms of biological role, catalytic component of a P4-ATPase flippase complex which catalyzes the hydrolysis of ATP coupled to the transport of glucosylceramide, phosphatidylcholine, phosphatidylethanolamine, and small amounts of phosphatidylserine from the lumenal to the cytosolic leaflet of the cell membrane and ensures the maintenance of asymmetric distribution of phospholipids. Does not appear to transport sphingomyelin, inositol phosphoceramide or phosphatidic acid. Required for efficient endocytosis. Required for protein transport from Golgi to vacuoles. This chain is Phospholipid-transporting ATPase DNF2 (DNF2), found in Saccharomyces cerevisiae (strain ATCC 204508 / S288c) (Baker's yeast).